The chain runs to 277 residues: Phosphate import ATP-binding protein PstB 2 (277 aa).

One can recognise an ABC transporter domain in the interval 31–272 (IEVPGLNLFY…PAKKQTEDYI (242 aa)). 63-70 (GPSGCGKS) lines the ATP pocket.

It belongs to the ABC transporter superfamily. Phosphate importer (TC 3.A.1.7) family. As to quaternary structure, the complex is composed of two ATP-binding proteins (PstB), two transmembrane proteins (PstC and PstA) and a solute-binding protein (PstS).

The protein resides in the cell inner membrane. The enzyme catalyses phosphate(out) + ATP + H2O = ADP + 2 phosphate(in) + H(+). In terms of biological role, part of the ABC transporter complex PstSACB involved in phosphate import. Responsible for energy coupling to the transport system. The protein is Phosphate import ATP-binding protein PstB 2 of Pseudomonas syringae pv. syringae (strain B728a).